Reading from the N-terminus, the 91-residue chain is MAERTTSGTPAKRSVRRRFSRRKGCRFCADNTLKIDYKEIRNLRYFITERGKIVPRRISGNCAEHQRKIREAIKRARNIALLPFTAGHSLD.

It belongs to the bacterial ribosomal protein bS18 family. Part of the 30S ribosomal subunit. Forms a tight heterodimer with protein bS6.

Its function is as follows. Binds as a heterodimer with protein bS6 to the central domain of the 16S rRNA, where it helps stabilize the platform of the 30S subunit. The polypeptide is Small ribosomal subunit protein bS18 (Syntrophotalea carbinolica (strain DSM 2380 / NBRC 103641 / GraBd1) (Pelobacter carbinolicus)).